We begin with the raw amino-acid sequence, 193 residues long: Cytidylate kinase (193 aa).

Residue 12–20 (GLAGSGTTT) participates in ATP binding.

This sequence belongs to the cytidylate kinase family. Type 2 subfamily.

It is found in the cytoplasm. It carries out the reaction CMP + ATP = CDP + ADP. It catalyses the reaction dCMP + ATP = dCDP + ADP. This Thermococcus kodakarensis (strain ATCC BAA-918 / JCM 12380 / KOD1) (Pyrococcus kodakaraensis (strain KOD1)) protein is Cytidylate kinase.